We begin with the raw amino-acid sequence, 528 residues long: ATP synthase F(1) complex catalytic subunit beta, mitochondrial (528 aa).

The N-terminal 46 residues, 1–46 (MLGLVGRVVAASASGALRGLSPSAPLPQAQLLLRAAPAALQPARDY), are a transit peptide targeting the mitochondrion. Ser106 carries O-linked (GlcNAc) serine glycosylation. N6-acetyllysine; alternate is present on residues Lys124 and Lys161. N6-succinyllysine; alternate occurs at positions 124 and 161. Lys198 carries the N6-acetyllysine modification. The ADP site is built by Gly209, Val210, Gly211, Lys212, Thr213, and Val214. Gly209 is an ATP binding site. Gly209, Val210, Gly211, Lys212, and Thr213 together coordinate phosphate. ATP is bound by residues Gly211, Lys212, Thr213, and Val214. Mg(2+) is bound at residue Thr213. Glu238 lines the Mg(2+) pocket. Arg239 contributes to the ATP binding site. Lys259 and Lys264 each carry N6-acetyllysine; alternate. An N6-succinyllysine; alternate mark is found at Lys259 and Lys264. Phosphothreonine is present on Thr312. Residue Ser415 is modified to Phosphoserine. Position 426 is an N6-acetyllysine (Lys426). Ser433 carries the post-translational modification Phosphoserine. N6-acetyllysine is present on residues Lys480 and Lys485. Lys522 bears the N6-acetyllysine; alternate mark. An N6-succinyllysine; alternate modification is found at Lys522.

This sequence belongs to the ATPase alpha/beta chains family. As to quaternary structure, homotrimer. Component of the ATP synthase complex composed at least of ATP5F1A/subunit alpha, ATP5F1B/subunit beta, ATP5MC1/subunit c (homooctomer), MT-ATP6/subunit a, MT-ATP8/subunit 8, ATP5ME/subunit e, ATP5MF/subunit f, ATP5MG/subunit g, ATP5MK/subunit k, ATP5MJ/subunit j, ATP5F1C/subunit gamma, ATP5F1D/subunit delta, ATP5F1E/subunit epsilon, ATP5PF/subunit F6, ATP5PB/subunit b, ATP5PD/subunit d, ATP5PO/subunit OSCP. ATP synthase complex consists of a soluble F(1) head domain (subunits alpha(3) and beta(3)) - the catalytic core - and a membrane F(0) domain - the membrane proton channel (subunits c, a, 8, e, f, g, k and j). These two domains are linked by a central stalk (subunits gamma, delta, and epsilon) rotating inside the F1 region and a stationary peripheral stalk (subunits F6, b, d, and OSCP). Interacts with PPIF. Interacts with BCL2L1 isoform BCL-X(L); the interaction mediates the association of BCL2L1 isoform BCL-X(L) with the mitochondrial membrane F(1)F(0) ATP synthase and enhances neurons metabolic efficiency. Interacts with CLN5 and PPT1. Interacts with S100A1; this interaction increases F1-ATPase activity. Interacts with MTLN. Interacts with TTC5/STRAP; the interaction results in decreased mitochondrial ATP production.

The protein resides in the mitochondrion inner membrane. The enzyme catalyses ATP + H2O + 4 H(+)(in) = ADP + phosphate + 5 H(+)(out). Catalytic subunit beta, of the mitochondrial membrane ATP synthase complex (F(1)F(0) ATP synthase or Complex V) that produces ATP from ADP in the presence of a proton gradient across the membrane which is generated by electron transport complexes of the respiratory chain. ATP synthase complex consist of a soluble F(1) head domain - the catalytic core - and a membrane F(1) domain - the membrane proton channel. These two domains are linked by a central stalk rotating inside the F(1) region and a stationary peripheral stalk. During catalysis, ATP synthesis in the catalytic domain of F(1) is coupled via a rotary mechanism of the central stalk subunits to proton translocation. In vivo, can only synthesize ATP although its ATP hydrolase activity can be activated artificially in vitro. With the subunit alpha (ATP5F1A), forms the catalytic core in the F(1) domain. In Bos taurus (Bovine), this protein is ATP synthase F(1) complex catalytic subunit beta, mitochondrial.